Reading from the N-terminus, the 156-residue chain is SPbeta prophage-derived uncharacterized protein YosH (156 aa).

The protein is SPbeta prophage-derived uncharacterized protein YosH (yosH) of Bacillus subtilis (strain 168).